A 1072-amino-acid polypeptide reads, in one-letter code: Carbamoyl phosphate synthase large chain (1072 aa).

Residues 1-401 (MPKRLDINTI…SLLKAVRSLE (401 aa)) form a carboxyphosphate synthetic domain region. ATP contacts are provided by Arg129, Arg169, Gly175, Gly176, Lys208, Ile210, Glu215, Gly241, Val242, His243, Gln284, and Glu298. An ATP-grasp 1 domain is found at 133–327 (RTLMQDLNEP…IAKLAAKIAV (195 aa)). Gln284, Glu298, and Asn300 together coordinate Mg(2+). Mn(2+)-binding residues include Gln284, Glu298, and Asn300. The tract at residues 402–546 (LGIYHLELDH…YSTYAEENES (145 aa)) is oligomerization domain. A carbamoyl phosphate synthetic domain region spans residues 547-929 (IVTDRKSVVV…ALYKGLVASG (383 aa)). Residues 671–861 (EAALTKLGIP…MANVATKVIL (191 aa)) enclose the ATP-grasp 2 domain. ATP contacts are provided by Arg707, Arg746, Glu752, Gly777, Val778, His779, Ser780, Gln820, and Glu832. Residues Gln820, Glu832, and Asn834 each coordinate Mg(2+). 3 residues coordinate Mn(2+): Gln820, Glu832, and Asn834. An MGS-like domain is found at 930–1072 (INIPTHGSVI…QTKRHEVVHA (143 aa)). Residues 930 to 1072 (INIPTHGSVI…QTKRHEVVHA (143 aa)) are allosteric domain.

It belongs to the CarB family. In terms of assembly, composed of two chains; the small (or glutamine) chain promotes the hydrolysis of glutamine to ammonia, which is used by the large (or ammonia) chain to synthesize carbamoyl phosphate. Tetramer of heterodimers (alpha,beta)4. Requires Mg(2+) as cofactor. Mn(2+) is required as a cofactor.

The enzyme catalyses hydrogencarbonate + L-glutamine + 2 ATP + H2O = carbamoyl phosphate + L-glutamate + 2 ADP + phosphate + 2 H(+). It catalyses the reaction hydrogencarbonate + NH4(+) + 2 ATP = carbamoyl phosphate + 2 ADP + phosphate + 2 H(+). It participates in amino-acid biosynthesis; L-arginine biosynthesis; carbamoyl phosphate from bicarbonate: step 1/1. Its pathway is pyrimidine metabolism; UMP biosynthesis via de novo pathway; (S)-dihydroorotate from bicarbonate: step 1/3. In terms of biological role, large subunit of the glutamine-dependent carbamoyl phosphate synthetase (CPSase). CPSase catalyzes the formation of carbamoyl phosphate from the ammonia moiety of glutamine, carbonate, and phosphate donated by ATP, constituting the first step of 2 biosynthetic pathways, one leading to arginine and/or urea and the other to pyrimidine nucleotides. The large subunit (synthetase) binds the substrates ammonia (free or transferred from glutamine from the small subunit), hydrogencarbonate and ATP and carries out an ATP-coupled ligase reaction, activating hydrogencarbonate by forming carboxy phosphate which reacts with ammonia to form carbamoyl phosphate. The protein is Carbamoyl phosphate synthase large chain of Bacillus cereus (strain ATCC 10987 / NRS 248).